Consider the following 608-residue polypeptide: Kelch-like protein 10 (608 aa).

Residues 39-106 (CDVVIKVNGF…AYTRTVPITP (68 aa)) form the BTB domain. 6 Kelch repeats span residues 292 to 339 (ILFA…YLKG), 340 to 386 (YVYI…VLSN), 388 to 433 (IYAM…TLYG), 434 to 480 (KVYI…AYGE), 481 to 527 (HVYA…VVDD), and 529 to 574 (LFVV…VVPG). Phosphoserine is present on Ser501.

Self-associates. Interacts with CUL3; indicative for the participation in an E3 ubiquitin ligase complex.

Its subcellular location is the cytoplasm. It functions in the pathway protein modification; protein ubiquitination. Its function is as follows. May be a substrate-specific adapter of a CUL3-based E3 ubiquitin-protein ligase complex which mediates the ubiquitination and subsequent proteasomal degradation of target proteins during spermatogenesis. The sequence is that of Kelch-like protein 10 (Klhl10) from Rattus norvegicus (Rat).